A 1288-amino-acid chain; its full sequence is Outer capsid protein lambda-2 (1288 aa).

892–899 (GAAAAGKS) is an ATP binding site.

It belongs to the orthoreovirus lambda-2 protein family. In terms of assembly, interacts with protein mu-NS; in viral inclusions.

Its subcellular location is the virion. The enzyme catalyses a 5'-end diphospho-ribonucleoside in mRNA + GTP + H(+) = a 5'-end (5'-triphosphoguanosine)-ribonucleoside in mRNA + diphosphate. It carries out the reaction a 5'-end (5'-triphosphoguanosine)-ribonucleoside in mRNA + S-adenosyl-L-methionine = a 5'-end (N(7)-methyl 5'-triphosphoguanosine)-ribonucleoside in mRNA + S-adenosyl-L-homocysteine. Its function is as follows. Outer capsid protein involved in mRNA capping. Catalyzes the last 3 enzymatic activities for formation of the 5' cap structure on the viral plus-strand transcripts, namely the RNA guanylyltransferase, RNA-7N- and RNA-2'O-methyltransferase activities. This chain is Outer capsid protein lambda-2 (L2), found in Reovirus type 2 (strain D5/Jones) (T2J).